Consider the following 67-residue polypeptide: Conotoxin ArMLKM-01 (67 aa).

Positions 1–24 (MLKMEVVLFTFLVLFPLSTLQLET) are cleaved as a signal peptide. Positions 25–51 (DQPVERYVENKQDLNPDESRNFMLPIV) are excised as a propeptide. Intrachain disulfides connect Cys54–Cys65, Cys55–Cys63, and Cys58–Cys66.

This sequence belongs to the conotoxin M superfamily. Expressed by the venom duct.

The protein localises to the secreted. The sequence is that of Conotoxin ArMLKM-01 from Conus arenatus (Sand-dusted cone).